Consider the following 222-residue polypeptide: S-crystallin SL20-1 (222 aa).

The GST N-terminal domain maps to 2-80; it reads PNYTLYYFNG…YLARENGYYG (79 aa). The region spanning 82–222 is the GST C-terminal domain; the sequence is NNMDMFRIDY…YLKKRNNTNW (141 aa).

Belongs to the GST superfamily. Lens.

In terms of biological role, S-crystallins are structural components of squids and octopi eye lens. Contains relatively little if any GST activity. In Nototodarus sloanii (Wellington flying squid), this protein is S-crystallin SL20-1.